Consider the following 283-residue polypeptide: NAD kinase (283 aa).

Asp-66 acts as the Proton acceptor in catalysis. Residues 66–67 (DG), 140–141 (ND), Arg-151, Arg-168, Asp-170, and Gln-240 each bind NAD(+).

The protein belongs to the NAD kinase family. A divalent metal cation serves as cofactor.

It localises to the cytoplasm. The catalysed reaction is NAD(+) + ATP = ADP + NADP(+) + H(+). Functionally, involved in the regulation of the intracellular balance of NAD and NADP, and is a key enzyme in the biosynthesis of NADP. Catalyzes specifically the phosphorylation on 2'-hydroxyl of the adenosine moiety of NAD to yield NADP. This Syntrophobacter fumaroxidans (strain DSM 10017 / MPOB) protein is NAD kinase.